The following is a 176-amino-acid chain: Translation initiation factor IF-3 (176 aa).

This sequence belongs to the IF-3 family. Monomer.

It localises to the cytoplasm. Functionally, IF-3 binds to the 30S ribosomal subunit and shifts the equilibrium between 70S ribosomes and their 50S and 30S subunits in favor of the free subunits, thus enhancing the availability of 30S subunits on which protein synthesis initiation begins. The polypeptide is Translation initiation factor IF-3 (Streptococcus pyogenes serotype M4 (strain MGAS10750)).